The following is a 110-amino-acid chain: Thiosulfate sulfurtransferase GlpE (110 aa).

Residues 17–105 (RENGAQVVDI…WRSVYPADTS (89 aa)) form the Rhodanese domain. Cysteine 65 serves as the catalytic Cysteine persulfide intermediate.

The protein belongs to the GlpE family.

The protein resides in the cytoplasm. It catalyses the reaction thiosulfate + hydrogen cyanide = thiocyanate + sulfite + 2 H(+). The catalysed reaction is thiosulfate + [thioredoxin]-dithiol = [thioredoxin]-disulfide + hydrogen sulfide + sulfite + 2 H(+). Transferase that catalyzes the transfer of sulfur from thiosulfate to thiophilic acceptors such as cyanide or dithiols. May function in a CysM-independent thiosulfate assimilation pathway by catalyzing the conversion of thiosulfate to sulfite, which can then be used for L-cysteine biosynthesis. The chain is Thiosulfate sulfurtransferase GlpE from Pseudomonas aeruginosa (strain LESB58).